Here is a 217-residue protein sequence, read N- to C-terminus: MRAPASSAASNRPGPSNHPTPRWNSKQFFLTYPHCNLTPSELMKELFSRLTEKIPGYIKVSQEFHKDGDPHLHVLIQLNTKLCTRNPKFFDVQGFHPNIQPVRDAEKVFGYISKTNGDSDEMGELQLRIKKPEKPTRDQRMAMIIASSTNRNEYLSMVRKEFPFDWAIRLQQFEYSAAALFTEPPPVYQSPFPNEQIVCPPELVDIIDQEWNQVTTD.

The segment covering 1 to 17 (MRAPASSAASNRPGPSN) has biased composition (low complexity). Residues 1 to 22 (MRAPASSAASNRPGPSNHPTPR) are disordered. Residues 22-125 (RWNSKQFFLT…NGDSDEMGEL (104 aa)) form the CRESS-DNA virus Rep endonuclease domain. The RCR-1 motif lies at 29-32 (FLTY). A divalent metal cation is bound by residues E63, H71, and H73. An RCR-2 motif is present at residues 71 to 73 (HLH). Residue Y111 is the For DNA cleavage activity of the active site. Positions 111–114 (YISK) match the RCR-3 motif. Positions 176-188 (SAAALFTEPPPVY) are oligomerization.

Belongs to the geminiviridae Rep protein family. As to quaternary structure, homooligomer. Part of the C- and V-complexes which are RepA-Rep-DNA complexes involved in the c-sense and v-sense transcription.

It is found in the host nucleus. It localises to the host cytoplasm. Implicated in enhancement of V-sense gene expression. Acts a an inhibitor of C-sense gene transcription. This chain is Replication-associated protein A, found in Miscanthus sacchariflorus (MiSV).